The primary structure comprises 320 residues: Lactamase-like protein GME11357 (320 aa).

Residues H106, H108, D110, and H111 each contribute to the Zn(2+) site. The Proton donor/acceptor role is filled by D110.

The protein belongs to the metallo-beta-lactamase superfamily. Zn(2+) is required as a cofactor.

Its pathway is secondary metabolite biosynthesis. In terms of biological role, lactamase-like protein; part of the gene cluster that mediates the biosynthesis of dibenzodioxocinones such as pestalotiollide B, a novel class of inhibitors against cholesterol ester transfer protein (CEPT). The biosynthesis initiates from condensation of acetate and malonate units catalyzed by the non-reducing PKS pks8/GME11356. Pks8/GME11356 lacks a thioesterase (TE) domain, which is important to the cyclizing of the third ring of atrochrysone carboxylic acid, and the esterase GME11355 might play the role of TE and catalyzes the cyclization reaction of the C ring. The lactamase-like protein GME11357 (or other beta-lactamases in Pestalotiopsis microspora) probably hydrolyzes the thioester bond between the ACP of pks8/GME11356 and the intermediate to release atrochrysone carboxylic acid, which is spontaneously dehydrates to form endocrocin anthrone. Endocrocin anthrone is further converted to emodin via the endocrocin intermediate. Emodin is then oxidized by several enzymes such as the Baeyer-Villiger oxidase GME11358, the oxidoreductase GME11367, the short chain dehydrogenase/reductase GME11373, as well as by other oxidoreductases from the cluster, to modify the A and C rings and open the B ring, and finally yield monodictyphenone. The prenyltransferase GME11375 may catalyze the addition reaction between the C5 side chains and the carbon bone of dibenzodioxocinones. The remaining biochemical reactions to the final product dibenzodioxocinones should be methylation catalyzed by methyltransferase GME11366 and reduction and lactonization reaction catalyzed by a series of oxidordeuctases. The sequence is that of Lactamase-like protein GME11357 from Pestalotiopsis microspora.